The sequence spans 56 residues: Large ribosomal subunit protein bL33 (56 aa).

This sequence belongs to the bacterial ribosomal protein bL33 family.

The sequence is that of Large ribosomal subunit protein bL33 from Helicobacter hepaticus (strain ATCC 51449 / 3B1).